The chain runs to 292 residues: MYEVIQKRKTKIINVLQSPELMRLIEDPSNLGISLHFPVSSLLKSNKCTPMPKLSTYSLASGGFKDWCADIPLDVPPEIDIIDFYWDVILCMESQFILDYNVPSKNKGNNQKSVAKLLKNKLVNDMKTTLKRLIYNENTKQYKNNNSHDGYNWRKLGSQYFILYLPLFTQELIWCKLNENYFHVVLPSLLNSRNVHDNHSTYINKDWLLALLELTSNLNQNFKFEYMKLRLYILRDDLINNGLDLLKNLNWVGGKLIKNEDREVLLNSTDLATDSISHLLGDENFVILEFEC.

It belongs to the ODC antizyme family. As to quaternary structure, interacts with ODC/SPE1 and thereby sterically blocks ODC homodimerization.

Functionally, ornithine decarboxylase (ODC) antizyme protein that negatively regulates ODC activity and intracellular polyamine biosynthesis in response to increased intracellular polyamine levels. Binds to ODC/SPE1 monomers, inhibiting the assembly of the functional ODC homodimer, and targets the monomers for ubiquitin-independent proteolytic destruction by the 26S proteasome. The sequence is that of Ornithine decarboxylase antizyme (OAZ1) from Saccharomyces cerevisiae (strain ATCC 204508 / S288c) (Baker's yeast).